A 218-amino-acid polypeptide reads, in one-letter code: Glutathione S-transferase Mu 4 (218 aa).

Positions 1–88 (MPMTLGYWDI…YIARKHNLCG (88 aa)) constitute a GST N-terminal domain. Residues 7 to 8 (YW), 46 to 50 (WLSEK), 59 to 60 (NL), and 72 to 73 (QS) each bind glutathione. The region spanning 90–208 (TEEEKIRVDI…KTSRFLRTPL (119 aa)) is the GST C-terminal domain. Tyrosine 116 is a binding site for substrate.

This sequence belongs to the GST superfamily. Mu family. In terms of assembly, homodimer.

Its subcellular location is the cytoplasm. It carries out the reaction RX + glutathione = an S-substituted glutathione + a halide anion + H(+). The catalysed reaction is 1-chloro-2,4-dinitrobenzene + glutathione = 2,4-dinitrophenyl-S-glutathione + chloride + H(+). The enzyme catalyses (13S,14S)-epoxy-(4Z,7Z,9E,11E,16Z,19Z)-docosahexaenoate + glutathione = (13R)-S-glutathionyl-(14S)-hydroxy-(4Z,7Z,9E,11E,16Z,19Z)-docosahexaenoate. It catalyses the reaction leukotriene C4 = leukotriene A4 + glutathione. Conjugation of reduced glutathione to a wide number of exogenous and endogenous hydrophobic electrophiles. Catalyzes the conjugation of leukotriene A4 with reduced glutathione (GSH) to form leukotriene C4. Can also catalyze the transfer of a glutathionyl group from glutathione (GSH) to 13(S),14(S)-epoxy-docosahexaenoic acid to form maresin conjugate in tissue regeneration 1 (MCTR1), a bioactive lipid mediator that possess potent anti-inflammatory and proresolving actions. The polypeptide is Glutathione S-transferase Mu 4 (Gstm4) (Rattus norvegicus (Rat)).